A 335-amino-acid polypeptide reads, in one-letter code: Mitochondrial thiamine diphosphate carrier 1 (335 aa).

Transmembrane regions (helical) follow at residues 13 to 29, 88 to 105, 127 to 150, 182 to 199, 231 to 247, and 304 to 323; these read KRAV…GAIS, VPAL…FAVL, YLSY…FDLL, LYAG…YAGL, SLSS…SGTV, and GIVP…FVAY. Solcar repeat units lie at residues 13–111, 124–210, and 232–329; these read KRAV…VKSF, LSPY…FKRW, and LSSF…ASDW.

Belongs to the mitochondrial carrier (TC 2.A.29) family.

It localises to the mitochondrion inner membrane. In terms of biological role, mitochondrial transporter that mediates uptake of thiamine diphosphate (ThDP) into mitochondria. This Arabidopsis thaliana (Mouse-ear cress) protein is Mitochondrial thiamine diphosphate carrier 1.